A 61-amino-acid polypeptide reads, in one-letter code: [Thr6]-bradykinyl-Val,Asp (61 aa).

The first 22 residues, 1-22 (MSFLKKSLFLVLFLGFVSFSIC), serve as a signal peptide directing secretion. The propeptide occupies 23–50 (EEEKREDEEEENEREENKESEEKRNQEE). A disordered region spans residues 24-61 (EEKREDEEEENEREENKESEEKRNQEERPPGFTPFRVD). Residues 26 to 36 (KREDEEEENER) show a composition bias toward acidic residues. Over residues 37–52 (EENKESEEKRNQEERP) the composition is skewed to basic and acidic residues. The residue at position 53 (Pro-53) is a 4-hydroxyproline; in form [Hyp3,Thr6]-bradykinyl-Val,Asp and [Hyp3,Thr6]-bradykinin.

This sequence belongs to the frog skin active peptide (FSAP) family. Bradykinin-related peptide subfamily. In terms of tissue distribution, expressed by the skin glands.

It localises to the secreted. In terms of biological role, induces relaxation of rat smooth muscle from tail artery (EC(50)=16.8 nM) and contraction of that from ileum (EC(50)=205 nM), urinary bladder (EC(50)=895 nM) and uterus (EC(50)=60.3 nM). Binds to both bradykinin receptor B1 (BDKRB1) and B2 (BDKRB2). Functionally, [Hyp3,Thr6]-bradykinin: Induces relaxation of rat smooth muscle from tail artery (EC(50)=56.7 nM) and contraction of that from ileum (EC(50)=588 nM), urinary bladder (EC(50)=4.6 uM) and uterus (EC(50)=3.9 nM). Binds to both bradykinin receptor B1 (BDKRB1) and B2 (BDKRB2). In arterial smooth muscle, the effect via BDKRB1 is stronger, in uterus, ileum and urinary bladder the effect via BDKRB2. Its function is as follows. Induces relaxation of rat smooth muscle from tail artery (EC(50)=10.8 nM) and contraction of that from ileum (EC(50)=645 nM), urinary bladder (EC(50)=1.1 uM) and uterus (EC(50)=1.2 uM). Binds to both bradykinin receptor B1 (BDKRB1) and B2 (BDKRB2). Apart from uterus smooth muscle, the effect via BDKRB2 is stronger. [Hyp3,Thr6]-bradykinyl-Val,Asp: Induces relaxation of rat smooth muscle from tail artery (EC(50)=3.5 nM) and contraction of that from ileum (EC(50)=223 nM), urinary bladder (EC(50)=1.5 uM) and uterus (EC(50)=356 nM). Binds to both bradykinin receptor B1 (BDKRB1) and B2 (BDKRB2); the effects via BDKRB2 are stronger. The chain is [Thr6]-bradykinyl-Val,Asp from Agalychnis dacnicolor (Giant Mexican leaf frog).